The sequence spans 387 residues: 1-hydroxy-2-naphthoate 1,2-dioxygenasee (387 aa).

2 Cupin type-2 domains span residues 103-171 and 271-337; these read FQLV…VWLD and VQRL…VLLF.

In terms of assembly, homohexamer. The cofactor is Fe(2+).

The catalysed reaction is 1-hydroxy-2-naphthoate + O2 = (3Z)-4-(2-carboxyphenyl)-2-oxobut-3-enoate + H(+). Dioxygenase involved in phenanthrene catabolism by mediating cleavage of 1-hydroxy-2-naphthoate. This is 1-hydroxy-2-naphthoate 1,2-dioxygenasee (phdI) from Nocardioides sp. (strain KP7).